Reading from the N-terminus, the 189-residue chain is Protein CotJC (189 aa).

This sequence belongs to the manganese catalase family.

The cotJ operon proteins affect spore coat composition. They are either required for the normal formation of the inner layers of the coat or are themselves structural components of the coat. This chain is Protein CotJC (cotJC), found in Bacillus subtilis (strain 168).